A 72-amino-acid chain; its full sequence is Large ribosomal subunit protein bL31 (72 aa).

Zn(2+) is bound by residues C16, C18, C37, and C40.

Belongs to the bacterial ribosomal protein bL31 family. Type A subfamily. Part of the 50S ribosomal subunit. Zn(2+) is required as a cofactor.

Functionally, binds the 23S rRNA. This is Large ribosomal subunit protein bL31 from Buchnera aphidicola subsp. Acyrthosiphon pisum (strain APS) (Acyrthosiphon pisum symbiotic bacterium).